Reading from the N-terminus, the 126-residue chain is Glycine cleavage system H protein (126 aa).

The Lipoyl-binding domain occupies 22-104 (TVTIGITEYA…YEKAWMVKVK (83 aa)). Lys63 carries the N6-lipoyllysine modification.

This sequence belongs to the GcvH family. In terms of assembly, the glycine cleavage system is composed of four proteins: P, T, L and H. The cofactor is (R)-lipoate.

Functionally, the glycine cleavage system catalyzes the degradation of glycine. The H protein shuttles the methylamine group of glycine from the P protein to the T protein. Its function is as follows. Is also involved in protein lipoylation via its role as an octanoyl/lipoyl carrier protein intermediate. The polypeptide is Glycine cleavage system H protein (Staphylococcus carnosus (strain TM300)).